The sequence spans 339 residues: Uroporphyrinogen decarboxylase (339 aa).

Residues 21-25 (RQAGR), Phe40, Asp71, Tyr147, Ser202, and His315 each bind substrate.

This sequence belongs to the uroporphyrinogen decarboxylase family. In terms of assembly, homodimer.

It is found in the cytoplasm. The catalysed reaction is uroporphyrinogen III + 4 H(+) = coproporphyrinogen III + 4 CO2. The protein operates within porphyrin-containing compound metabolism; protoporphyrin-IX biosynthesis; coproporphyrinogen-III from 5-aminolevulinate: step 4/4. Its function is as follows. Catalyzes the decarboxylation of four acetate groups of uroporphyrinogen-III to yield coproporphyrinogen-III. The protein is Uroporphyrinogen decarboxylase of Helicobacter pylori (strain ATCC 700392 / 26695) (Campylobacter pylori).